Consider the following 197-residue polypeptide: Ion-translocating oxidoreductase complex subunit B (197 aa).

A hydrophobic region spans residues 1 to 26 (MSIVIIAVLALSALALTFGAVLGFAS). In terms of domain architecture, 4Fe-4S spans 32–90 (EGNPIVDQIDGLLPQTQCGQCGYPGCRPYAEAIANGDAINKCPPGGEATITALADLLDV). Positions 49, 52, 57, 73, 115, 118, 121, 125, 145, 148, 151, and 155 each coordinate [4Fe-4S] cluster. 2 4Fe-4S ferredoxin-type domains span residues 106–135 (QVAY…GAAK) and 136–165 (QMHT…MIPA).

The protein belongs to the 4Fe4S bacterial-type ferredoxin family. RnfB subfamily. In terms of assembly, the complex is composed of six subunits: RnfA, RnfB, RnfC, RnfD, RnfE and RnfG. The cofactor is [4Fe-4S] cluster.

It is found in the cell inner membrane. Functionally, part of a membrane-bound complex that couples electron transfer with translocation of ions across the membrane. This Hahella chejuensis (strain KCTC 2396) protein is Ion-translocating oxidoreductase complex subunit B.